A 495-amino-acid polypeptide reads, in one-letter code: Protein YhjJ (495 aa).

The first 24 residues, 1–24, serve as a signal peptide directing secretion; the sequence is MQGTKIRLLAGSLLMLASAGYVQA.

It belongs to the peptidase M16 family.

It localises to the periplasm. The protein is Protein YhjJ (yhjJ) of Salmonella typhimurium (strain LT2 / SGSC1412 / ATCC 700720).